A 398-amino-acid chain; its full sequence is Putative F-box protein At3g17620 (398 aa).

An F-box domain is found at 1–45 (MMSDLPRDLLEERLSRVPVKSLREARFTCKNWKTLSKKRSFTKKH).

This chain is Putative F-box protein At3g17620, found in Arabidopsis thaliana (Mouse-ear cress).